A 775-amino-acid polypeptide reads, in one-letter code: Serine/threonine-protein kinase-like protein CCR1 (775 aa).

The N-terminal stretch at 1-23 is a signal peptide; the sequence is METRCSLLFLSLILLYLPKPGSG. Residues 24–439 lie on the Extracellular side of the membrane; that stretch reads FGSSGPIAAS…DKHWHQLQRL (416 aa). N-linked (GlcNAc...) asparagine glycosylation is found at Asn-57, Asn-102, Asn-167, Asn-213, Asn-220, Asn-241, Asn-261, Asn-292, Asn-328, and Asn-360. A TNFR-Cys repeat occupies 351–406; that stretch reads PCNEKEFAFNASILNEPDLTSLCVRKELMVCSPCGSDCSHGFFLSSSCTANSDRIC. Cystine bridges form between Cys-352–Cys-381, Cys-384–Cys-398, and Cys-388–Cys-406. Asn-414 carries N-linked (GlcNAc...) asparagine glycosylation. The chain crosses the membrane as a helical span at residues 440-460; that stretch reads VLIIGSCASALLIIIIGCCVV. Over 461 to 775 the chain is Cytoplasmic; the sequence is PRIVTSPNKE…EHVARDALIF (315 aa). Residues 520–770 enclose the Protein kinase domain; sequence FKEFNELGRG…LANWLEHVAR (251 aa). Residues 526 to 534 and Lys-548 each bind ATP; that span reads LGRGSYGFV. The active-site Proton acceptor is the Asp-645.

The protein belongs to the protein kinase superfamily. Ser/Thr protein kinase family. Homodimer. As to expression, expressed in roots, leaves, shoot apical meristems (SAM), and floral buds.

It localises to the membrane. It carries out the reaction L-seryl-[protein] + ATP = O-phospho-L-seryl-[protein] + ADP + H(+). The enzyme catalyses L-threonyl-[protein] + ATP = O-phospho-L-threonyl-[protein] + ADP + H(+). Serine/threonine-protein kinase with low activity. This Arabidopsis thaliana (Mouse-ear cress) protein is Serine/threonine-protein kinase-like protein CCR1 (CCR1).